The sequence spans 416 residues: GTPase Obg (416 aa).

Residues 1–157 (MFQDVLVITV…RRLRLELMLI (157 aa)) enclose the Obg domain. Disordered regions lie at residues 25 to 44 (EKFV…GGSV) and 62 to 82 (TYKA…RGGE). Residues 32 to 42 (GPDGGDGGRGG) show a composition bias toward gly residues. Residues 63 to 72 (YKAEDGEHGR) show a composition bias toward basic and acidic residues. An OBG-type G domain is found at 158 to 324 (ADVGLVGYPN…LKEALHALVR (167 aa)). GTP is bound by residues 164–171 (GYPNAGKS), 189–193 (FTTLS), 211–214 (DIPG), 277–280 (NKVD), and 305–307 (SAL). Positions 171 and 191 each coordinate Mg(2+). The 79-residue stretch at 336–414 (PRKEVQAGVE…IGGLEFEYIP (79 aa)) folds into the OCT domain.

This sequence belongs to the TRAFAC class OBG-HflX-like GTPase superfamily. OBG GTPase family. In terms of assembly, monomer. It depends on Mg(2+) as a cofactor.

The protein localises to the cytoplasm. An essential GTPase which binds GTP, GDP and possibly (p)ppGpp with moderate affinity, with high nucleotide exchange rates and a fairly low GTP hydrolysis rate. Plays a role in control of the cell cycle, stress response, ribosome biogenesis and in those bacteria that undergo differentiation, in morphogenesis control. This chain is GTPase Obg, found in Thermus thermophilus (strain ATCC BAA-163 / DSM 7039 / HB27).